The chain runs to 108 residues: Putative DNA-directed RNA polymerase subunit 1 inactive homolog (108 aa).

This chain is Putative DNA-directed RNA polymerase subunit 1 inactive homolog, found in Acanthamoeba polyphaga (Amoeba).